The sequence spans 508 residues: Immunoglobulin G-binding protein A (508 aa).

An N-terminal signal peptide occupies residues Met-1–Ala-36. The short motif at Tyr-7–Ser-18 is the YSIRK-G/S signaling motif element. Residues Ala-37–Lys-92 form an Immunoglobulin-binding region E repeat. The stretch at Ala-93–Lys-153 is one Immunoglobulin-binding region D repeat. The stretch at Ala-154–Lys-211 is one Immunoglobulin-binding region A repeat. The stretch at Ala-212–Lys-269 is one Immunoglobulin-binding region B repeat. Residues Ala-270 to Lys-327 form an Immunoglobulin-binding region C repeat. Basic and acidic residues predominate over residues Lys-318 to Asn-412. Disordered regions lie at residues Lys-318–Asn-424 and Lys-459–Glu-479. 12 tandem repeats follow at residues Lys-333 to Asn-340, Lys-341 to Asn-348, Lys-349 to Lys-356, Lys-357 to Asn-364, Lys-365 to Lys-372, Lys-373 to Asn-380, Lys-381 to Asn-388, Lys-389 to Asn-396, Lys-397 to Lys-405, Pro-406 to Gly-413, Val-414 to Asp-421, and Thr-422 to Ala-429. Positions Lys-333 to Lys-408 are 12 X 8 AA approximate tandem repeats. One can recognise a LysM domain in the interval Gly-413–Val-457. The LPXTG sorting signal signature appears at Leu-474–Gly-478. Thr-477 carries the post-translational modification Pentaglycyl murein peptidoglycan amidated threonine. A propeptide spans Gly-478–Leu-508 (removed by sortase).

This sequence belongs to the immunoglobulin-binding protein SpA family. In terms of assembly, interacts with host TNFRSF1A; this interaction leads to the stimulation of both surface expression and shedding of TNFRSF1A.

The protein localises to the secreted. Its subcellular location is the cell wall. In terms of biological role, plays a role in the inhibition of the host innate and adaptive immune responses. Possesses five immunoglobulin-binding domains that capture both the fragment crystallizable region (Fc region) and the Fab region (part of Ig that identifies antigen) of immunoglobulins. In turn, Staphylococcus aureus is protected from phagocytic killing via inhibition of Ig Fc region. In addition, the host elicited B-cell response is prevented due to a decrease of antibody-secreting cell proliferation that enter the bone marrow, thereby decreasing long-term antibody production. Inhibits osteogenesis by preventing osteoblast proliferation and expression of alkaline phosphatase, type I collagen, osteopontin and osteocalcin. Acts directly as a pro-inflammatory factor in the lung through its ability to bind and activate tumor necrosis factor alpha receptor 1/TNFRSF1A. The chain is Immunoglobulin G-binding protein A (spa) from Staphylococcus aureus.